Consider the following 281-residue polypeptide: Diaminopimelate epimerase (281 aa).

Substrate is bound by residues N13 and N66. C75 functions as the Proton donor in the catalytic mechanism. Residues 76–77, N164, N197, and 215–216 contribute to the substrate site; these read GN and ER. Catalysis depends on C224, which acts as the Proton acceptor. Substrate is bound at residue 225–226; that stretch reads GT.

The protein belongs to the diaminopimelate epimerase family. Homodimer.

It is found in the cytoplasm. The enzyme catalyses (2S,6S)-2,6-diaminopimelate = meso-2,6-diaminopimelate. It participates in amino-acid biosynthesis; L-lysine biosynthesis via DAP pathway; DL-2,6-diaminopimelate from LL-2,6-diaminopimelate: step 1/1. In terms of biological role, catalyzes the stereoinversion of LL-2,6-diaminopimelate (L,L-DAP) to meso-diaminopimelate (meso-DAP), a precursor of L-lysine and an essential component of the bacterial peptidoglycan. This Rippkaea orientalis (strain PCC 8801 / RF-1) (Cyanothece sp. (strain PCC 8801)) protein is Diaminopimelate epimerase.